Here is a 485-residue protein sequence, read N- to C-terminus: Glutamyl-tRNA(Gln) amidotransferase subunit A (485 aa).

Catalysis depends on charge relay system residues lysine 79 and serine 154. The Acyl-ester intermediate role is filled by serine 178.

Belongs to the amidase family. GatA subfamily. In terms of assembly, heterotrimer of A, B and C subunits.

The catalysed reaction is L-glutamyl-tRNA(Gln) + L-glutamine + ATP + H2O = L-glutaminyl-tRNA(Gln) + L-glutamate + ADP + phosphate + H(+). Functionally, allows the formation of correctly charged Gln-tRNA(Gln) through the transamidation of misacylated Glu-tRNA(Gln) in organisms which lack glutaminyl-tRNA synthetase. The reaction takes place in the presence of glutamine and ATP through an activated gamma-phospho-Glu-tRNA(Gln). The protein is Glutamyl-tRNA(Gln) amidotransferase subunit A of Staphylococcus aureus (strain MW2).